We begin with the raw amino-acid sequence, 193 residues long: Fibrillarin-like rRNA/tRNA 2'-O-methyltransferase (193 aa).

S-adenosyl-L-methionine contacts are provided by residues T82–T83, E100–F101, D125–A126, and D145–Q148.

The protein belongs to the methyltransferase superfamily. Fibrillarin family. Interacts with nop5. Component of box C/D small ribonucleoprotein (sRNP) particles that contain rpl7ae, FlpA and nop5, plus a guide RNA.

In terms of biological role, involved in pre-rRNA and tRNA processing. Utilizes the methyl donor S-adenosyl-L-methionine to catalyze the site-specific 2'-hydroxyl methylation of ribose moieties in rRNA and tRNA. Site specificity is provided by a guide RNA that base pairs with the substrate. Methylation occurs at a characteristic distance from the sequence involved in base pairing with the guide RNA. This chain is Fibrillarin-like rRNA/tRNA 2'-O-methyltransferase, found in Methanosarcina mazei (Methanosarcina frisia).